A 264-amino-acid chain; its full sequence is 3-methyl-2-oxobutanoate hydroxymethyltransferase (264 aa).

Asp45 and Asp84 together coordinate Mg(2+). Residues 45-46, Asp84, and Lys112 each bind 3-methyl-2-oxobutanoate; that span reads DS. Residue Glu114 participates in Mg(2+) binding. Glu181 (proton acceptor) is an active-site residue.

Belongs to the PanB family. Homodecamer; pentamer of dimers. Mg(2+) serves as cofactor.

It localises to the cytoplasm. The enzyme catalyses 3-methyl-2-oxobutanoate + (6R)-5,10-methylene-5,6,7,8-tetrahydrofolate + H2O = 2-dehydropantoate + (6S)-5,6,7,8-tetrahydrofolate. It functions in the pathway cofactor biosynthesis; (R)-pantothenate biosynthesis; (R)-pantoate from 3-methyl-2-oxobutanoate: step 1/2. Catalyzes the reversible reaction in which hydroxymethyl group from 5,10-methylenetetrahydrofolate is transferred onto alpha-ketoisovalerate to form ketopantoate. In Edwardsiella ictaluri (strain 93-146), this protein is 3-methyl-2-oxobutanoate hydroxymethyltransferase.